We begin with the raw amino-acid sequence, 332 residues long: Homoarginine-6-hydroxylase 2-ODD-C23.1 (332 aa).

A Fe2OG dioxygenase domain is found at 182 to 287 (PFWVMRLIGY…RVCVAFFYET (106 aa)). Residues H210, D212, and H268 each coordinate Fe cation. R278 contributes to the 2-oxoglutarate binding site.

It belongs to the iron/ascorbate-dependent oxidoreductase family. Fe(2+) serves as cofactor.

The protein localises to the cytoplasm. Its subcellular location is the cytosol. The enzyme catalyses L-homoarginine + 2-oxoglutarate + O2 = 6-hydroxy-L-homoarginine + succinate + CO2. Slightly inhibited by canavanine (Can), the 5-oxa-analog of arginine. Its function is as follows. 2-oxoglutarate-dependent dioxygenase catalyzing homoarginine 6-hydroxylation thus producing 6-hydroxy-L-homoarginine. Guanidine (Gd) is in turn synthesized by the spontaneous conversion of 6-hydroxy-L-homoarginine to (S)-2-amino-6-oxohexanoate (RHEA:79843); guanidine is a nitrogen-rich compound that can serve as a defense or signaling substance. This Arabidopsis thaliana (Mouse-ear cress) protein is Homoarginine-6-hydroxylase 2-ODD-C23.1.